The chain runs to 350 residues: MAHLNAATLINAERSDCSLRLLENFPSLTITVRQDTSGRDLVASTYSATGMSAAARNLNPLANFRHMRQPGYLRPPHTALKPLPLRTAIMNGYESLTRHNGQIQVTPGLRELIKECAPELHESILPATVQHITPLSLATRLSMVCAGLHCDDLVETRPVTTSLTVAFTTKVLILAVDPDEAKLAVNARGADHLLTVDGASTILTNFGYDIRGNVRRDAPQALSPSDLPDCYPVLWLGAVAGLIAVQLETDLDQLGMNLTEQKTLTAHPPAVDAFMRKLQSFALLSSRLFHLCVAHALEPFRDMAALLRVWQAPTLVQIPEVSLAIKGPSIEVQGNGTQLFQVRAAPIGGM.

The protein belongs to the aquareoviridae NS2 protein family. As to quaternary structure, homomultimer.

Its function is as follows. Protein that binds to ssRNA and may be involved in genome packaging. In Ctenopharyngodon idella (Grass carp), this protein is Non-structural protein 2 (S9).